A 450-amino-acid chain; its full sequence is tRNA modification GTPase MnmE (450 aa).

The (6S)-5-formyl-5,6,7,8-tetrahydrofolate site is built by Arg-23, Glu-79, and Lys-118. One can recognise a TrmE-type G domain in the interval 214 to 374 (GITLILVGKP…LKDHILAKVG (161 aa)). Asn-224 serves as a coordination point for K(+). GTP-binding positions include 224–229 (NAGKSS), 243–249 (TSIAGTT), and 268–271 (DTAG). Ser-228 is a Mg(2+) binding site. Thr-243, Ile-245, and Thr-248 together coordinate K(+). Thr-249 is a Mg(2+) binding site. Lys-450 contacts (6S)-5-formyl-5,6,7,8-tetrahydrofolate.

The protein belongs to the TRAFAC class TrmE-Era-EngA-EngB-Septin-like GTPase superfamily. TrmE GTPase family. Homodimer. Heterotetramer of two MnmE and two MnmG subunits. The cofactor is K(+).

It localises to the cytoplasm. Exhibits a very high intrinsic GTPase hydrolysis rate. Involved in the addition of a carboxymethylaminomethyl (cmnm) group at the wobble position (U34) of certain tRNAs, forming tRNA-cmnm(5)s(2)U34. In Francisella philomiragia subsp. philomiragia (strain ATCC 25017 / CCUG 19701 / FSC 153 / O#319-036), this protein is tRNA modification GTPase MnmE.